Reading from the N-terminus, the 498-residue chain is MISSKPRLVVPYGLKTLLEGVSRAILKINPPNITQFAAVYFKELIVFREGNTSLDIKDLVKQFHQIKVEKWSEGTTQEKEPECMEEQVETSVVSQEPTRMEKSTDTEEDNIAGPLFMNKTTQFPSVHAEVLLEPEETPEAACGGSPKPSTPKAVTPPSSPSPAAVSQEFAYVPADPAQFAAQMLGNVSSIHSDQSDVLMVDVATSMPVFSEEVLSSEAAEDARVAIPSVYSAEVVALQVLSQTSVHVDLGPKPKDDEAEPTTASSFPLQDEQDPPAYDQAPEVPLQADIEVTSFVHVSSIYNNEPVIEGVTYVEQIPEHIVIPFTDHVASLKDNEPPDSPIPVACDTGMSEKTVGSVSLAQLEVESHYSSVHMEAEASVLFSDTSLKGQPAQFPDAGGSTKAVGSEKPLHLEVEFTALVPGNSGQEESQGSSAAQEMEVKLVLSGEAATAVLSAASVRAAGGSPTPVPEGLTEPELEPELEAALEQGLMKPDAETTTV.

The 38-residue stretch at 12 to 49 (YGLKTLLEGVSRAILKINPPNITQFAAVYFKELIVFRE) folds into the RIIa domain. Disordered regions lie at residues 74-107 (GTTQ…TDTE), 135-164 (EETP…SPAA), and 247-279 (VDLG…AYDQ). Low complexity predominate over residues 145–164 (SPKPSTPKAVTPPSSPSPAA).

Interacts with FSCB. In terms of processing, phosphorylated on tyrosine residues during in vitro capacitation. Dephosphorylation affects its ability to bind calcium. Expressed in testis.

It is found in the cytoplasm. The protein localises to the cytoskeleton. It localises to the cell projection. Its subcellular location is the cilium. The protein resides in the flagellum. Functionally, may function as a regulator of both motility- and head-associated functions such as capacitation and the acrosome reaction. Binds calcium in vitro. The protein is Calcium-binding tyrosine phosphorylation-regulated protein (CABYR) of Vulpes vulpes (Red fox).